A 633-amino-acid polypeptide reads, in one-letter code: Terminal nucleotidyltransferase 4B (633 aa).

Positions 1–115 (MFRSGERPLG…GGGRADGGGG (115 aa)) are disordered. A compositionally biased stretch (polar residues) spans 25 to 34 (ETTNNNNNHH). Low complexity-rich tracts occupy residues 36–52 (PAAW…ASPV) and 60–70 (RPAAALPASES). Residues 87–98 (ASTYGLNYSLLQ) show a composition bias toward polar residues. Gly residues predominate over residues 103–115 (RAAGGGRADGGGG). Aspartate 191 and aspartate 193 together coordinate Mg(2+). 6 residues coordinate ATP: glycine 254, lysine 279, serine 297, tyrosine 298, asparagine 382, and arginine 386. A PAP-associated domain is found at 322–382 (NYGVLLIEFF…YIEDPLQPGN (61 aa)). The tract at residues 484-633 (LGKCRSNASE…RDAPLSELCR (150 aa)) is disordered. Residues 492–519 (SEPLSKHSSNSSSGPVSSSSATQSSSSD) show a composition bias toward low complexity. Lysine 531 participates in a covalent cross-link: Glycyl lysine isopeptide (Lys-Gly) (interchain with G-Cter in SUMO2). A compositionally biased stretch (polar residues) spans 542-552 (RVGSQDVSLEV). A Phosphoserine modification is found at serine 545. Residues lysine 558, lysine 573, and lysine 587 each participate in a glycyl lysine isopeptide (Lys-Gly) (interchain with G-Cter in SUMO2) cross-link. The span at 559-614 (MQSTQTTNTPNNANKSQHGSARLFRSSSKGFQGTAQTSHGALMTSKQHQGKSNTQY) shows a compositional bias: polar residues. The short motif at 618 to 624 (KKRRHKR) is the Basic, involved in binding of the RNA primer element.

Belongs to the DNA polymerase type-B-like family. As to quaternary structure, component of a nucleolar TRAMP-like complex, an ATP-dependent exosome regulatory complex consisting of a helicase (MTREX), an oligadenylate polymerase (TENT4B or TENT4A), and a substrate specific RNA-binding factor (ZCCHC7 or ZCCHC8). Several TRAMP-like complexes exist with specific compositions and are associated with nuclear, or nucleolar RNA exosomes. Mg(2+) is required as a cofactor. Requires Mn(2+) as cofactor.

It localises to the nucleus. The protein resides in the nucleolus. Its subcellular location is the cytoplasm. The enzyme catalyses RNA(n) + ATP = RNA(n)-3'-adenine ribonucleotide + diphosphate. Functionally, terminal nucleotidyltransferase that catalyzes preferentially the transfer of ATP and GTP on RNA 3' poly(A) tail creating a heterogeneous 3' poly(A) tail leading to mRNAs stabilization by protecting mRNAs from active deadenylation. Also functions as a catalytic subunit of a TRAMP-like complex which has a poly(A) RNA polymerase activity and is involved in a post-transcriptional quality control mechanism. Polyadenylation with short oligo(A) tails is required for the degradative activity of the exosome on several of its nuclear RNA substrates. Doesn't need a cofactor for polyadenylation activity (in vitro). Plays a role in replication-dependent histone mRNA degradation, probably through terminal uridylation of mature histone mRNAs. May play a role in sister chromatid cohesion. This chain is Terminal nucleotidyltransferase 4B, found in Mus musculus (Mouse).